We begin with the raw amino-acid sequence, 38 residues long: Large ribosomal subunit protein bL36 (38 aa).

This sequence belongs to the bacterial ribosomal protein bL36 family.

The sequence is that of Large ribosomal subunit protein bL36 from Buchnera aphidicola subsp. Acyrthosiphon pisum (strain 5A).